The following is a 350-amino-acid chain: Carbamoyl dehydratase HypE (350 aa).

Cysteine 350 bears the S-carbamoylcysteine mark. Cysteine 350 bears the S-cyanocysteine mark.

Belongs to the HypE family. In terms of processing, modified by HypF, which adds a carboxamido group to the thiolate of the C-terminal cysteine, yielding a protein-S-carboxamide. The carboxamido group is then dehydrated by HypE itself to yield a protein-thiocyanate.

It catalyses the reaction C-terminal S-carboxamide-L-cysteinyl-[HypE protein] + ATP = C-terminal S-cyanate-L-cysteinyl-[HypE protein] + ADP + phosphate + H(+). It participates in protein modification; [NiFe] hydrogenase maturation. Its function is as follows. Involved in the maturation of [NiFe] hydrogenases. Along with HypF, it catalyzes the synthesis of the CN ligands of the active site iron of [NiFe]-hydrogenases. HypE catalyzes the ATP-dependent dehydration of the carboxamido group attached to its C-terminal cysteine to a cyano group. This Rhizobium leguminosarum bv. viciae protein is Carbamoyl dehydratase HypE.